A 366-amino-acid polypeptide reads, in one-letter code: tRNA/tmRNA (uracil-C(5))-methyltransferase (366 aa).

The S-adenosyl-L-methionine site is built by Gln-190, Tyr-218, Asn-223, Glu-239, and Asp-299. Cys-324 acts as the Nucleophile in catalysis. Glu-358 (proton acceptor) is an active-site residue.

The protein belongs to the class I-like SAM-binding methyltransferase superfamily. RNA M5U methyltransferase family. TrmA subfamily.

It catalyses the reaction uridine(54) in tRNA + S-adenosyl-L-methionine = 5-methyluridine(54) in tRNA + S-adenosyl-L-homocysteine + H(+). The catalysed reaction is uridine(341) in tmRNA + S-adenosyl-L-methionine = 5-methyluridine(341) in tmRNA + S-adenosyl-L-homocysteine + H(+). Functionally, dual-specificity methyltransferase that catalyzes the formation of 5-methyluridine at position 54 (m5U54) in all tRNAs, and that of position 341 (m5U341) in tmRNA (transfer-mRNA). This chain is tRNA/tmRNA (uracil-C(5))-methyltransferase, found in Shigella flexneri serotype 5b (strain 8401).